Reading from the N-terminus, the 92-residue chain is Large ribosomal subunit protein bL28 (92 aa).

It belongs to the bacterial ribosomal protein bL28 family.

In Borreliella burgdorferi (strain ATCC 35210 / DSM 4680 / CIP 102532 / B31) (Borrelia burgdorferi), this protein is Large ribosomal subunit protein bL28.